The primary structure comprises 236 residues: Probable pseudouridine-5'-phosphatase YKL033W-A (236 aa).

This sequence belongs to the HAD-like hydrolase superfamily.

It carries out the reaction XMP + H2O = xanthosine + phosphate. It catalyses the reaction psi-UMP + H2O = pseudouridine + phosphate. Its function is as follows. Nucleotidase with XMP as the best in vitro substrate. Low catalytic efficiencies of YKL033W-A observed with XMP and other substrates suggest that these could be secondary activities for this protein, and its primary substrate is not yet identified. May possess pseudouridine 5'-phosphatase activity and together with dTTP/UTP pyrophosphatase YOR111W might constitute a pathway for the detoxification of pseudouridine 5'-triphosphate (Psi-UTP) and -monophosphate (Psi-UMP). The polypeptide is Probable pseudouridine-5'-phosphatase YKL033W-A (Saccharomyces cerevisiae (strain ATCC 204508 / S288c) (Baker's yeast)).